We begin with the raw amino-acid sequence, 548 residues long: LDL receptor repeat-containing protein egg-2 (548 aa).

Residues 1-49 (MSQQAGNAQRGRFDEEPMSLGEKISHRMDQLKEIVSSSCPCAGKFPPVA) lie on the Cytoplasmic side of the membrane. The chain crosses the membrane as a helical; Signal-anchor for type II membrane protein span at residues 50 to 70 (IVLIVALIILGVIIAVPLVIF). Over 71-548 (LSPSAQAMSS…LALKNSGLRP (478 aa)) the chain is Extracellular. N-linked (GlcNAc...) asparagine glycosylation occurs at Asn-119. LDL-receptor class A domains follow at residues 122–160 (TCSGFGFACTGSIDMIIPSSKRCDGLKDCSDGSDEENCK), 161–213 (ECQS…ASCR), 215–252 (KCSKDQFKCSGSDACLPISVKCDGVSDCENESDESNCN), 253–288 (KCQKGAHKCGKNCIKASKVCDGIPDCDDGSDEHQCD), 291–328 (TCSGSEKALCEDGTCIMRSQVCDGKHDCLDGIDEENCP), 370–412 (KCDP…KKCT), 416–454 (ECVVESSIQFTCDNKCLESSRRCDGVWDCEDKSDEKGCD), and 455–492 (KCPSRSFKCSADKKCLPFHTRCNGVAECSDGSDEHKCS). 23 disulfides stabilise this stretch: Cys-130–Cys-150, Cys-144–Cys-159, Cys-162–Cys-190, Cys-168–Cys-203, Cys-197–Cys-212, Cys-216–Cys-229, Cys-223–Cys-242, Cys-236–Cys-251, Cys-254–Cys-265, Cys-261–Cys-278, Cys-272–Cys-287, Cys-292–Cys-305, Cys-300–Cys-318, Cys-312–Cys-327, Cys-371–Cys-389, Cys-379–Cys-402, Cys-396–Cys-411, Cys-417–Cys-431, Cys-427–Cys-444, Cys-438–Cys-453, Cys-456–Cys-469, Cys-463–Cys-482, and Cys-476–Cys-491. Asn-244 carries an N-linked (GlcNAc...) asparagine glycan. A glycan (N-linked (GlcNAc...) asparagine) is linked at Asn-527.

It is found in the cell membrane. The protein localises to the endosome membrane. Probable receptor which is required for the oocyte-to-zygote transition although its exact function is controversial. Redundantly with egg-1, seems to be required for fertilization probably by promoting the interaction or fusion between sperm and oocyte. Conversely, shown to be dispensable for fertilization but required together with egg-1 for the formation of a continuous and cohesive eggshell chitin layer by maintaining a homogenous distribution of chitin synthase chs-1 at the unfertilized oocyte cell membrane. Appears to recruit or maintain together to the unfertilized oocyte cortex several proteins including chs-1, kinase mbk-2 and pseudophosphatase egg-3, and possibly egg-4 and egg-5. This is LDL receptor repeat-containing protein egg-2 from Caenorhabditis elegans.